The following is a 248-amino-acid chain: Triosephosphate isomerase (248 aa).

The substrate site is built by Asn12 and Lys14. An N6-acetyllysine modification is found at Lys14. A 3'-nitrotyrosine modification is found at Tyr68. His96 serves as the catalytic Electrophile. Position 106 is a phosphoserine (Ser106). Lys142 is covalently cross-linked (Glycyl lysine isopeptide (Lys-Gly) (interchain with G-Cter in SUMO1)). Lys149 carries the N6-succinyllysine modification. At Lys156 the chain carries N6-acetyllysine; alternate. Lys156 is subject to N6-succinyllysine; alternate. Residue Glu166 is the Proton acceptor of the active site. Phosphothreonine is present on Thr173. N6-acetyllysine; alternate is present on Lys194. N6-succinyllysine; alternate is present on Lys194. Residue Lys194 is modified to N6-methyllysine; alternate. A 3'-nitrotyrosine modification is found at Tyr209. At Ser212 the chain carries Phosphoserine. Thr214 carries the phosphothreonine modification. Ser223 carries the post-translational modification Phosphoserine. Position 238 is an N6-acetyllysine (Lys238).

Belongs to the triosephosphate isomerase family. Homodimer.

It is found in the cytoplasm. It carries out the reaction dihydroxyacetone phosphate = methylglyoxal + phosphate. The catalysed reaction is D-glyceraldehyde 3-phosphate = dihydroxyacetone phosphate. The protein operates within carbohydrate degradation; glycolysis; D-glyceraldehyde 3-phosphate from glycerone phosphate: step 1/1. It functions in the pathway carbohydrate biosynthesis; gluconeogenesis. Functionally, triosephosphate isomerase is an extremely efficient metabolic enzyme that catalyzes the interconversion between dihydroxyacetone phosphate (DHAP) and D-glyceraldehyde-3-phosphate (G3P) in glycolysis and gluconeogenesis. In terms of biological role, it is also responsible for the non-negligible production of methylglyoxal a reactive cytotoxic side-product that modifies and can alter proteins, DNA and lipids. The chain is Triosephosphate isomerase (TPI1) from Sus scrofa (Pig).